We begin with the raw amino-acid sequence, 539 residues long: Phosphoenolpyruvate carboxykinase (ATP) (539 aa).

The substrate site is built by Arg64, Tyr206, and Lys212. Residues Lys212, His231, and 247–255 contribute to the ATP site; that span reads GLSGTGKTT. Residues Lys212 and His231 each coordinate Mn(2+). Position 268 (Asp268) interacts with Mn(2+). Residues Glu296, Arg332, 448-449, and Thr454 each bind ATP; that span reads RI. Substrate is bound at residue Arg332.

This sequence belongs to the phosphoenolpyruvate carboxykinase (ATP) family. Monomer. It depends on Mn(2+) as a cofactor.

The protein localises to the cytoplasm. It carries out the reaction oxaloacetate + ATP = phosphoenolpyruvate + ADP + CO2. The protein operates within carbohydrate biosynthesis; gluconeogenesis. Its function is as follows. Involved in the gluconeogenesis. Catalyzes the conversion of oxaloacetate (OAA) to phosphoenolpyruvate (PEP) through direct phosphoryl transfer between the nucleoside triphosphate and OAA. The chain is Phosphoenolpyruvate carboxykinase (ATP) from Salmonella arizonae (strain ATCC BAA-731 / CDC346-86 / RSK2980).